An 819-amino-acid chain; its full sequence is MNSDQDVALKLAQERAEIVAKYDRGREGAEIEPWEDADYLVYKVTDRFGFLHEEELPYHNAAADRQKQLEIERTSKWLKMLKKWERYKNTEKFHRRIYKGIPLQLRGEVWALLLEIPKMKEETRDLYSKLKHRARGCSPDIRQIDLDVNRTFRDHIMFRDRYGVKQQSLFHVLAAYSIYNTEVGYCQGMSQITALLLMYMNEEDAFWALVKLFSGPKHAMHGFFVQGFPKLLRFQEHHEKILNKFLSKLKQHLDSQEIYTSFYTMKWFFQCFLDRTPFRLNLRIWDIYIFEGERVLTAMSYTILKLHKKHLMKLSMEELVEFLQETLAKDFFFEDDFVIEQLQVSMAELKRAKLDLPEPGKEDEYPKKPLGQLPPESACVNHLSNGQRSVGRPSPKTSSRREDGSPRKNHEHSPVHHSRNGTPERAGQSRRKSVDEGSKNLKHEAESQRKPSPGMQDSSRHYNHAAANQNSNAISNVRKEFMPKWRKPSDASAIERTTKYAVEGKSHSALPALPVAIPGSAETRLPNSRQKMKALDGGEGKRGSNASQYDNVPGGESEHGASAEEGPERTHPHSPRKHPEPSPSPPKVPNKFTFKVQPPSHVRYPPQLPEEDHRAAYPPSYSNPPVYHGNSPKHVPTAHSGFVSTQISPRPQINPSRRPYGSSLSVDTSPEKAYSRPTPVVLPSSRIEVLPIDMGARGYGSSGSPKNGQFILPPVDYLPENRKWSEVSYTYRPEMHGQSWTRDAHRSHLSNLPNYAAFQHIPFQAHGLPEVSVDSPVRYKMSAAVEDASPPGYPYAGPSPSAHHYRNGEGLSVQESVLL.

M1 is modified (N-acetylmethionine). The 193-residue stretch at 100–292 (GIPLQLRGEV…RIWDIYIFEG (193 aa)) folds into the Rab-GAP TBC domain. Positions 355–367 (DLPEPGKEDEYPK) are enriched in basic and acidic residues. Disordered stretches follow at residues 355–498 (DLPE…ERTT) and 513–678 (LPVA…SRPT). A phosphoserine mark is found at S389, S394, and S398. 2 stretches are compositionally biased toward basic and acidic residues: residues 399–414 (SRRE…EHSP) and 432–449 (KSVD…ESQR). The segment covering 464–476 (HAAANQNSNAISN) has biased composition (low complexity). Composition is skewed to basic and acidic residues over residues 477–489 (VRKE…RKPS) and 533–542 (KALDGGEGKR). S544 and S547 each carry phosphoserine. Over residues 556 to 571 (ESEHGASAEEGPERTH) the composition is skewed to basic and acidic residues. Phosphoserine is present on residues S574, S631, S644, S648, S665, S669, and S704. Residues 642–655 (FVSTQISPRPQINP) show a composition bias toward polar residues. Y717 is modified (phosphotyrosine). The segment covering 788–802 (ASPPGYPYAGPSPSA) has biased composition (low complexity). The interval 788-807 (ASPPGYPYAGPSPSAHHYRN) is disordered.

Interacts with EPS8.

It is found in the golgi apparatus. The protein localises to the cytoplasmic vesicle. Functionally, acts as a GTPase-activating protein for RAB5A and RAB43. Involved in receptor trafficking. In complex with EPS8 inhibits internalization of EGFR. Involved in retrograde transport from the endocytic pathway to the Golgi apparatus. Involved in the transport of Shiga toxin from early and recycling endosomes to the trans-Golgi network. Required for structural integrity of the Golgi complex. The chain is USP6 N-terminal-like protein (Usp6nl) from Mus musculus (Mouse).